The sequence spans 562 residues: Potassium-transporting ATPase potassium-binding subunit (562 aa).

Helical transmembrane passes span 5 to 25 (GILAIFLVVLALVACAWPLGG), 65 to 85 (AYLRAMMVSNLVMALFAYAVF), 135 to 155 (IGITFLQFTSAATGLAAAMAF), 181 to 201 (LLLPIAAILAVLLLALGVPET), 257 to 277 (ILEIMGMGLIPTALVFTAGHF), 283 to 303 (LAIVLCTLLGAILLAGAYIVY), 331 to 351 (FGLPLTSLFVAATTAYTTGAV), 358 to 378 (LMPLSGMVPLLFMMFNLIFGG), 381 to 401 (VGLLNILMFLIIAVFISGLMV), 422 to 442 (AAMLVHPFVILVPTAIAMALP), 486 to 506 (ISIGLVMLFGRYVSIIAMLAI), and 528 to 548 (FAFGYVFVAVFIIVGALTFFP).

This sequence belongs to the KdpA family. In terms of assembly, the system is composed of three essential subunits: KdpA, KdpB and KdpC.

Its subcellular location is the cell membrane. Part of the high-affinity ATP-driven potassium transport (or Kdp) system, which catalyzes the hydrolysis of ATP coupled with the electrogenic transport of potassium into the cytoplasm. This subunit binds the extracellular potassium ions and delivers the ions to the membrane domain of KdpB through an intramembrane tunnel. This chain is Potassium-transporting ATPase potassium-binding subunit, found in Alicyclobacillus acidocaldarius subsp. acidocaldarius (strain ATCC 27009 / DSM 446 / BCRC 14685 / JCM 5260 / KCTC 1825 / NBRC 15652 / NCIMB 11725 / NRRL B-14509 / 104-IA) (Bacillus acidocaldarius).